Reading from the N-terminus, the 176-residue chain is MSWRSEQIWIELIPGSRRGSNFVWAFILFFGSLEFILVGTASYFSQNLIAFFPQGMVMIFYGISGLFISLYLSSMLFWNVGGGYNQFDKTRGVICIFRWVFPGRNRRLLLRFFMKDIRSIRIEVKEGFYTRRLLYMDIRGQKAIPLTRTDEVLTPVEIEKKAAELASFLCVPIEVL.

Helical transmembrane passes span 22–42 (FVWAFILFFGSLEFILVGTAS) and 48–68 (LIAFFPQGMVMIFYGISGLFI).

The protein belongs to the Ycf4 family.

It is found in the plastid thylakoid membrane. In terms of biological role, seems to be required for the assembly of the photosystem I complex. In Cuscuta gronovii (Common dodder), this protein is Photosystem I assembly protein Ycf4.